A 128-amino-acid chain; its full sequence is Large ribosomal subunit protein bL12c (128 aa).

The segment at 103-128 (QEGLGKDAAEDAKKQIEDAGGKVSLT) is disordered. The segment covering 106 to 122 (LGKDAAEDAKKQIEDAG) has biased composition (basic and acidic residues).

The protein belongs to the bacterial ribosomal protein bL12 family. In terms of assembly, homodimer. Part of the ribosomal stalk of the 50S ribosomal subunit. Forms a multimeric L10(L12)X complex, where L10 forms an elongated spine to which 2 to 4 L12 dimers bind in a sequential fashion. Binds GTP-bound translation factors.

The protein resides in the plastid. It is found in the chloroplast. Functionally, forms part of the ribosomal stalk which helps the ribosome interact with GTP-bound translation factors. Is thus essential for accurate translation. The sequence is that of Large ribosomal subunit protein bL12c from Thalassiosira pseudonana (Marine diatom).